A 405-amino-acid chain; its full sequence is Phosphopentomutase (405 aa).

The Mn(2+) site is built by Asp-10, Asp-303, His-308, Asp-344, His-345, and His-356.

It belongs to the phosphopentomutase family. Requires Mn(2+) as cofactor.

The protein localises to the cytoplasm. It carries out the reaction 2-deoxy-alpha-D-ribose 1-phosphate = 2-deoxy-D-ribose 5-phosphate. The catalysed reaction is alpha-D-ribose 1-phosphate = D-ribose 5-phosphate. Its pathway is carbohydrate degradation; 2-deoxy-D-ribose 1-phosphate degradation; D-glyceraldehyde 3-phosphate and acetaldehyde from 2-deoxy-alpha-D-ribose 1-phosphate: step 1/2. Functionally, isomerase that catalyzes the conversion of deoxy-ribose 1-phosphate (dRib-1-P) and ribose 1-phosphate (Rib-1-P) to deoxy-ribose 5-phosphate (dRib-5-P) and ribose 5-phosphate (Rib-5-P), respectively. This Shewanella pealeana (strain ATCC 700345 / ANG-SQ1) protein is Phosphopentomutase.